The chain runs to 212 residues: KxDL motif-containing protein CG10681 (212 aa).

The interval 128-159 (RSSLAEEAEDDTEAQAKKTAETPAPAAAKPVL) is disordered. Residues 148–157 (ETPAPAAAKP) show a composition bias toward low complexity.

Belongs to the KXD1 family.

The polypeptide is KxDL motif-containing protein CG10681 (Drosophila melanogaster (Fruit fly)).